A 79-amino-acid chain; its full sequence is Cell division protein ZapB (79 aa).

Residues 4–78 (EVFEKLESKV…LRALLGKMEE (75 aa)) are a coiled coil.

The protein belongs to the ZapB family. Homodimer. The ends of the coiled-coil dimer bind to each other, forming polymers. Interacts with FtsZ.

The protein resides in the cytoplasm. In terms of biological role, non-essential, abundant cell division factor that is required for proper Z-ring formation. It is recruited early to the divisome by direct interaction with FtsZ, stimulating Z-ring assembly and thereby promoting cell division earlier in the cell cycle. Its recruitment to the Z-ring requires functional FtsA or ZipA. The protein is Cell division protein ZapB of Serratia proteamaculans (strain 568).